Here is a 438-residue protein sequence, read N- to C-terminus: Tol-Pal system protein TolB (438 aa).

Positions Met-1–Ala-36 are cleaved as a signal peptide.

It belongs to the TolB family. In terms of assembly, the Tol-Pal system is composed of five core proteins: the inner membrane proteins TolA, TolQ and TolR, the periplasmic protein TolB and the outer membrane protein Pal. They form a network linking the inner and outer membranes and the peptidoglycan layer.

It is found in the periplasm. Functionally, part of the Tol-Pal system, which plays a role in outer membrane invagination during cell division and is important for maintaining outer membrane integrity. The protein is Tol-Pal system protein TolB of Bordetella pertussis (strain Tohama I / ATCC BAA-589 / NCTC 13251).